A 1007-amino-acid chain; its full sequence is Mediator of RNA polymerase II transcription subunit 5 (1007 aa).

This sequence belongs to the Mediator complex subunit 5 family. Component of the Mediator complex.

It is found in the nucleus. Its function is as follows. Component of the Mediator complex, a coactivator involved in the regulated transcription of nearly all RNA polymerase II-dependent genes. Mediator functions as a bridge to convey information from gene-specific regulatory proteins to the basal RNA polymerase II transcription machinery. Mediator is recruited to promoters by direct interactions with regulatory proteins and serves as a scaffold for the assembly of a functional preinitiation complex with RNA polymerase II and the general transcription factors. This Aspergillus fumigatus (strain ATCC MYA-4609 / CBS 101355 / FGSC A1100 / Af293) (Neosartorya fumigata) protein is Mediator of RNA polymerase II transcription subunit 5 (nut1).